Here is a 232-residue protein sequence, read N- to C-terminus: Large ribosomal subunit protein uL1 (232 aa).

The protein belongs to the universal ribosomal protein uL1 family. Part of the 50S ribosomal subunit.

Functionally, binds directly to 23S rRNA. The L1 stalk is quite mobile in the ribosome, and is involved in E site tRNA release. Protein L1 is also a translational repressor protein, it controls the translation of the L11 operon by binding to its mRNA. The sequence is that of Large ribosomal subunit protein uL1 from Burkholderia mallei (strain NCTC 10247).